The sequence spans 25 residues: Xenoposin precursor fragment BM2 (25 aa).

In terms of tissue distribution, expressed by the skin glands.

It is found in the secreted. Functionally, antimicrobial peptide. The chain is Xenoposin precursor fragment BM2 from Xenopus boumbaensis (Mawa clawed frog).